Reading from the N-terminus, the 542-residue chain is CTP synthase (542 aa).

An amidoligase domain region spans residues Met-1 to Ile-265. CTP is bound at residue Ser-13. Ser-13 serves as a coordination point for UTP. ATP is bound by residues Ser-14 to Leu-19 and Asp-71. 2 residues coordinate Mg(2+): Asp-71 and Glu-139. Residues Asp-146–Glu-148, Lys-186–Gln-191, and Lys-222 contribute to the CTP site. UTP-binding positions include Lys-186 to Gln-191 and Lys-222. Positions Thr-291 to Leu-541 constitute a Glutamine amidotransferase type-1 domain. Gly-353 provides a ligand contact to L-glutamine. Catalysis depends on Cys-380, which acts as the Nucleophile; for glutamine hydrolysis. Residues Phe-381–Gln-384, Glu-404, and Arg-469 each bind L-glutamine. Residues His-514 and Glu-516 contribute to the active site.

The protein belongs to the CTP synthase family. Homotetramer.

It carries out the reaction UTP + L-glutamine + ATP + H2O = CTP + L-glutamate + ADP + phosphate + 2 H(+). The enzyme catalyses L-glutamine + H2O = L-glutamate + NH4(+). The catalysed reaction is UTP + NH4(+) + ATP = CTP + ADP + phosphate + 2 H(+). Its pathway is pyrimidine metabolism; CTP biosynthesis via de novo pathway; CTP from UDP: step 2/2. With respect to regulation, allosterically activated by GTP, when glutamine is the substrate; GTP has no effect on the reaction when ammonia is the substrate. The allosteric effector GTP functions by stabilizing the protein conformation that binds the tetrahedral intermediate(s) formed during glutamine hydrolysis. Inhibited by the product CTP, via allosteric rather than competitive inhibition. Catalyzes the ATP-dependent amination of UTP to CTP with either L-glutamine or ammonia as the source of nitrogen. Regulates intracellular CTP levels through interactions with the four ribonucleotide triphosphates. The protein is CTP synthase of Parvibaculum lavamentivorans (strain DS-1 / DSM 13023 / NCIMB 13966).